The sequence spans 465 residues: Serine/threonine-protein kinase 38 (465 aa).

N-acetylalanine is present on Ala-2. Positions 62 to 87 are interaction with S100B; it reads KRLRRSAHARKETEFLRLKRTRLGLE. Thr-74 bears the Phosphothreonine mark. The Protein kinase domain maps to 89–382; sequence FESLKVIGRG…VEEIKNNLFF (294 aa). Residues 95–103 and Lys-118 each bind ATP; that span reads IGRGAFGEV. Asp-212 acts as the Proton acceptor in catalysis. The residue at position 264 (Ser-264) is a Phosphoserine. Phosphoserine; by autocatalysis is present on Ser-281. Residues 306–311 carry the UFM1-interacting motif (UFIM) motif; the sequence is WSLGVI. The AGC-kinase C-terminal domain maps to 383-455; it reads EGVDWEHIRE…KRFEGLTARG (73 aa). A Phosphothreonine; by STK24/MST3 modification is found at Thr-444.

It belongs to the protein kinase superfamily. AGC Ser/Thr protein kinase family. In terms of assembly, homodimeric S100B binds two molecules of STK38. Interacts with MOB1 and MOB2. Interacts with MAP3K1 and MAP3K2 (via the kinase catalytic domain). Forms a tripartite complex with MOBKL1B and STK3/MST2. Interacts with MICAL1; leading to inhibit the protein kinase activity by antagonizing activation by MST1/STK4. Requires Mg(2+) as cofactor. In terms of processing, ISGylated. Phosphorylated by STK3/MST2 and this is enhanced by MOBKL1B. As to expression, expressed at high levels in spleen, lung, thymus, brain and fat tissue.

The protein localises to the nucleus. Its subcellular location is the cytoplasm. It is found in the chromosome. The enzyme catalyses L-seryl-[protein] + ATP = O-phospho-L-seryl-[protein] + ADP + H(+). The catalysed reaction is L-threonyl-[protein] + ATP = O-phospho-L-threonyl-[protein] + ADP + H(+). Its activity is regulated as follows. Activated by binding of S100B which releases autoinhibitory N-lobe interactions, enabling ATP to bind and the autophosphorylation of Ser-281. Thr-444 then undergoes calcium-dependent phosphorylation by STK24/MST3. Interactions between phosphorylated Thr-444 and the N-lobe promote additional structural changes that complete the activation of the kinase. Autoinhibition is also released by the binding of MOB1/MOBKL1A and MOB2/HCCA2 to the N-terminal of STK38. Its function is as follows. Serine/threonine-protein kinase that acts as a negative regulator of MAP3K1/2 signaling. Converts MAP3K2 from its phosphorylated form to its non-phosphorylated form and inhibits autophosphorylation of MAP3K2. Acts as an ufmylation 'reader' in a kinase-independent manner: specifically recognizes and binds mono-ufmylated histone H4 in response to DNA damage, promoting the recruitment of SUV39H1 to the double-strand breaks, resulting in ATM activation. The sequence is that of Serine/threonine-protein kinase 38 from Mus musculus (Mouse).